Reading from the N-terminus, the 194-residue chain is Phosphoheptose isomerase (194 aa).

The SIS domain occupies 37 to 194 (ISNSFKQGGK…LIEFEMAKQA (158 aa)). 52 to 54 (NGG) serves as a coordination point for substrate. Positions 61 and 65 each coordinate Zn(2+). Substrate-binding positions include Glu65, 93 to 94 (ND), 119 to 121 (STS), Ser124, and Gln172. Residues Gln172 and His180 each coordinate Zn(2+).

Belongs to the SIS family. GmhA subfamily. Homotetramer. Zn(2+) serves as cofactor.

The protein localises to the cytoplasm. It carries out the reaction 2 D-sedoheptulose 7-phosphate = D-glycero-alpha-D-manno-heptose 7-phosphate + D-glycero-beta-D-manno-heptose 7-phosphate. Its pathway is carbohydrate biosynthesis; D-glycero-D-manno-heptose 7-phosphate biosynthesis; D-glycero-alpha-D-manno-heptose 7-phosphate and D-glycero-beta-D-manno-heptose 7-phosphate from sedoheptulose 7-phosphate: step 1/1. In terms of biological role, catalyzes the isomerization of sedoheptulose 7-phosphate in D-glycero-D-manno-heptose 7-phosphate. The polypeptide is Phosphoheptose isomerase (Actinobacillus pleuropneumoniae serotype 5b (strain L20)).